The following is a 436-amino-acid chain: GTPase Der (436 aa).

EngA-type G domains follow at residues 4–167 (PTVA…PVEE) and 175–351 (IRFS…ESQN). GTP is bound by residues 10–17 (GRPNVGKS), 57–61 (DTGGI), 119–122 (NKVD), 181–188 (GRPNVGKS), 229–233 (DTAGM), and 294–297 (NKWD). The 85-residue stretch at 352–436 (KRIPSAVLND…PIHLIARKRK (85 aa)) folds into the KH-like domain.

It belongs to the TRAFAC class TrmE-Era-EngA-EngB-Septin-like GTPase superfamily. EngA (Der) GTPase family. As to quaternary structure, associates with the 50S ribosomal subunit.

In terms of biological role, GTPase that plays an essential role in the late steps of ribosome biogenesis. The sequence is that of GTPase Der from Streptococcus pyogenes serotype M2 (strain MGAS10270).